We begin with the raw amino-acid sequence, 203 residues long: ATP-dependent Clp protease proteolytic subunit 1 (203 aa).

The active-site Nucleophile is the Ser103. The active site involves His128.

Belongs to the peptidase S14 family. In terms of assembly, fourteen ClpP subunits assemble into 2 heptameric rings which stack back to back to give a disk-like structure with a central cavity, resembling the structure of eukaryotic proteasomes.

The protein resides in the cytoplasm. The catalysed reaction is Hydrolysis of proteins to small peptides in the presence of ATP and magnesium. alpha-casein is the usual test substrate. In the absence of ATP, only oligopeptides shorter than five residues are hydrolyzed (such as succinyl-Leu-Tyr-|-NHMec, and Leu-Tyr-Leu-|-Tyr-Trp, in which cleavage of the -Tyr-|-Leu- and -Tyr-|-Trp bonds also occurs).. Functionally, cleaves peptides in various proteins in a process that requires ATP hydrolysis. Has a chymotrypsin-like activity. Plays a major role in the degradation of misfolded proteins. This is ATP-dependent Clp protease proteolytic subunit 1 from Treponema pallidum (strain Nichols).